A 444-amino-acid polypeptide reads, in one-letter code: Proline--tRNA ligase (444 aa).

Belongs to the class-II aminoacyl-tRNA synthetase family. ProS type 2 subfamily. In terms of assembly, homodimer.

Its subcellular location is the cytoplasm. The catalysed reaction is tRNA(Pro) + L-proline + ATP = L-prolyl-tRNA(Pro) + AMP + diphosphate. Functionally, catalyzes the attachment of proline to tRNA(Pro) in a two-step reaction: proline is first activated by ATP to form Pro-AMP and then transferred to the acceptor end of tRNA(Pro). The protein is Proline--tRNA ligase of Pelagibacter ubique (strain HTCC1062).